Reading from the N-terminus, the 83-residue chain is Vitellogenesis-inhibiting hormone (83 aa).

3 disulfides stabilise this stretch: cysteine 15/cysteine 52, cysteine 32/cysteine 48, and cysteine 35/cysteine 61.

In terms of tissue distribution, found in the sinus glands of both male and female. Found also in the brain; the neuroendocrine structures of the protocerebrum.

Its subcellular location is the secreted. Functionally, inhibits secondary vitellogenesis in females. Has no hyperglycemic or molt-inhibiting activity. This chain is Vitellogenesis-inhibiting hormone, found in Armadillidium vulgare (Pillbug).